A 931-amino-acid polypeptide reads, in one-letter code: Envelope glycoprotein B (931 aa).

The first 71 residues, 1 to 71, serve as a signal peptide directing secretion; the sequence is MSPCGYYSKW…FSMFVTAVVS (71 aa). Residues 72–786 are Virion surface-facing; the sequence is VSPSSFYESL…HGFTTFLSNP (715 aa). 5 cysteine pairs are disulfide-bonded: Cys-122–Cys-584, Cys-139–Cys-540, Cys-213–Cys-277, Cys-369–Cys-417, and Cys-608–Cys-645. Asn-147 is a glycosylation site (N-linked (GlcNAc...) asparagine; by host). The involved in fusion and/or binding to host membrane stretch occupies residues 179–185; the sequence is AWAGSSY. Asn-257 carries an N-linked (GlcNAc...) asparagine; by host glycan. The segment at 264–271 is involved in fusion and/or binding to host membrane; that stretch reads GTPGTYRT. Residues Asn-435, Asn-503, Asn-620, and Asn-686 are each glycosylated (N-linked (GlcNAc...) asparagine; by host). Hydrophobic membrane proximal region regions lie at residues 731–784 and 764–784; these read IDKV…TFLS and VVLGATGALLSTVHGFTTFLS. The helical transmembrane segment at 787–807 threads the bilayer; sequence FGALAVGLLVLAGLVAAFFAY. Over 808 to 931 the chain is Intravirion; sequence RYVLKLKTSP…RVRTENVTGV (124 aa). Residues 881-884 carry the Golgi targeting motif; the sequence is YMTL. The Di-leucine internalization motif motif lies at 904–906; sequence LLT. The Internalization motif signature appears at 920–923; it reads YSRV.

The protein belongs to the herpesviridae glycoprotein B family. Homotrimer; disulfide-linked. Binds to heparan sulfate proteoglycans. Interacts with gH/gL heterodimer. Interacts with gE. Post-translationally, a proteolytic cleavage by host furin generates two subunits that remain linked by disulfide bonds.

Its subcellular location is the virion membrane. It is found in the host cell membrane. It localises to the host endosome membrane. The protein localises to the host Golgi apparatus membrane. Its function is as follows. Envelope glycoprotein that forms spikes at the surface of virion envelope. Essential for the initial attachment to heparan sulfate moieties of the host cell surface proteoglycans. Involved in fusion of viral and cellular membranes leading to virus entry into the host cell. Following initial binding to its host receptors, membrane fusion is mediated by the fusion machinery composed at least of gB and the heterodimer gH/gL. May be involved in the fusion between the virion envelope and the outer nuclear membrane during virion egress. In Varicella-zoster virus (strain Dumas) (HHV-3), this protein is Envelope glycoprotein B.